The following is a 578-amino-acid chain: Arginine--tRNA ligase (578 aa).

The 'HIGH' region motif lies at 127–137 (PNLAKEMHVGH).

The protein belongs to the class-I aminoacyl-tRNA synthetase family. In terms of assembly, monomer.

It is found in the cytoplasm. It catalyses the reaction tRNA(Arg) + L-arginine + ATP = L-arginyl-tRNA(Arg) + AMP + diphosphate. The sequence is that of Arginine--tRNA ligase from Pseudomonas fluorescens (strain ATCC BAA-477 / NRRL B-23932 / Pf-5).